The sequence spans 288 residues: MSLDKFKIAMQYAMPKHFISRVVGKLAAAKAGVLTTTLIKLFIKQYKVDMSEAKHPDPAHYESFNEFFTRPLKDGARPIVADSDIIIHPVDGAISQLGDIVDGQLIQAKGHDYSLQALLGGNKDDTTPFLGGKFATIYLAPKDYHRIHMPIDGTLSKMIYVPGDLFSVNPLTAQNVPNLFARNERVVAIFETEIGPLAMVLVGATIVASIETIWAGTVTPPAGSDVFSWNYPTKGENAISLKKGEEMGRFKLGSTVVLAWGDDKADILDDQLPETVTRLGTPFAKIDD.

Catalysis depends on charge relay system; for autoendoproteolytic cleavage activity residues aspartate 91, histidine 148, and serine 254. Residue serine 254 is the Schiff-base intermediate with substrate; via pyruvic acid; for decarboxylase activity of the active site. At serine 254 the chain carries Pyruvic acid (Ser); by autocatalysis.

This sequence belongs to the phosphatidylserine decarboxylase family. PSD-B subfamily. Prokaryotic type I sub-subfamily. In terms of assembly, heterodimer of a large membrane-associated beta subunit and a small pyruvoyl-containing alpha subunit. Pyruvate is required as a cofactor. In terms of processing, is synthesized initially as an inactive proenzyme. Formation of the active enzyme involves a self-maturation process in which the active site pyruvoyl group is generated from an internal serine residue via an autocatalytic post-translational modification. Two non-identical subunits are generated from the proenzyme in this reaction, and the pyruvate is formed at the N-terminus of the alpha chain, which is derived from the carboxyl end of the proenzyme. The autoendoproteolytic cleavage occurs by a canonical serine protease mechanism, in which the side chain hydroxyl group of the serine supplies its oxygen atom to form the C-terminus of the beta chain, while the remainder of the serine residue undergoes an oxidative deamination to produce ammonia and the pyruvoyl prosthetic group on the alpha chain. During this reaction, the Ser that is part of the protease active site of the proenzyme becomes the pyruvoyl prosthetic group, which constitutes an essential element of the active site of the mature decarboxylase.

It is found in the cell membrane. The enzyme catalyses a 1,2-diacyl-sn-glycero-3-phospho-L-serine + H(+) = a 1,2-diacyl-sn-glycero-3-phosphoethanolamine + CO2. It participates in phospholipid metabolism; phosphatidylethanolamine biosynthesis; phosphatidylethanolamine from CDP-diacylglycerol: step 2/2. Functionally, catalyzes the formation of phosphatidylethanolamine (PtdEtn) from phosphatidylserine (PtdSer). This chain is Phosphatidylserine decarboxylase proenzyme, found in Pseudoalteromonas translucida (strain TAC 125).